The sequence spans 127 residues: Large ribosomal subunit protein bL12 (127 aa).

It belongs to the bacterial ribosomal protein bL12 family. As to quaternary structure, homodimer. Part of the ribosomal stalk of the 50S ribosomal subunit. Forms a multimeric L10(L12)X complex, where L10 forms an elongated spine to which 2 to 4 L12 dimers bind in a sequential fashion. Binds GTP-bound translation factors.

Its function is as follows. Forms part of the ribosomal stalk which helps the ribosome interact with GTP-bound translation factors. Is thus essential for accurate translation. This chain is Large ribosomal subunit protein bL12, found in Carboxydothermus hydrogenoformans (strain ATCC BAA-161 / DSM 6008 / Z-2901).